Here is a 1167-residue protein sequence, read N- to C-terminus: ATP-dependent helicase/deoxyribonuclease subunit B (1167 aa).

In terms of domain architecture, UvrD-like helicase ATP-binding spans 1–359 (MSLRFLLGRS…IRQTEAYRDL (359 aa)). 8–15 (GRSGSGKT) is a binding site for ATP. The 307-residue stretch at 282–588 (VNRRHQDKAL…EFALVPPAID (307 aa)) folds into the UvrD-like helicase C-terminal domain. Residues Cys803, Cys1125, Cys1128, and Cys1134 each contribute to the [4Fe-4S] cluster site.

It belongs to the helicase family. AddB/RexB type 1 subfamily. In terms of assembly, heterodimer of AddA and AddB. Mg(2+) is required as a cofactor. Requires [4Fe-4S] cluster as cofactor.

Its function is as follows. The heterodimer acts as both an ATP-dependent DNA helicase and an ATP-dependent, dual-direction single-stranded exonuclease. Recognizes the chi site generating a DNA molecule suitable for the initiation of homologous recombination. The AddB subunit has 5' -&gt; 3' nuclease activity but not helicase activity. In Geobacillus thermodenitrificans (strain NG80-2), this protein is ATP-dependent helicase/deoxyribonuclease subunit B.